The primary structure comprises 456 residues: GTPase Der (456 aa).

EngA-type G domains follow at residues 3–167 (FTIA…PPSD) and 185–360 (IRVA…AVWN). GTP is bound by residues 9 to 16 (GRPNVGKS), 56 to 60 (DTAGL), and 119 to 122 (NKSE). Residues 162–181 (IVPPSDDEDDEREETDEERA) are disordered. Residues 166–178 (SDDEDDEREETDE) are compositionally biased toward acidic residues. GTP is bound by residues 191–198 (GRPNAGKS), 238–242 (DTAGL), and 303–306 (NKWD). Residues 361 to 445 (RRVPTAALNR…PVRITLREKA (85 aa)) enclose the KH-like domain.

The protein belongs to the TRAFAC class TrmE-Era-EngA-EngB-Septin-like GTPase superfamily. EngA (Der) GTPase family. As to quaternary structure, associates with the 50S ribosomal subunit.

In terms of biological role, GTPase that plays an essential role in the late steps of ribosome biogenesis. The sequence is that of GTPase Der from Bradyrhizobium sp. (strain ORS 278).